The chain runs to 380 residues: MTRAGLSPLAWLDEVETQRRAAGLRRSLRARPPVGTVLDLASNDYLGLSQHPRVIDGGVAALRTWGAGATGSRLVTGNTELHEQFEDALASFVGADSALVFSSGYTANLGAVVALSGPGSLLVSDAYTHASLVDACRLSRARVVVTPHNDVAAVARALATRDEERAVVVTDSVFSADGDLAPLRELHDACRRHGALMIVDEAHGLGVRGDRGRGLLDEVGLAGAPDVVMTTTLSKALGSQGGVVLGPAAVRDHLIDAARPFIFDTGLAPAAVGAAHAALQVLVEEPWRAQRVLDHATTLAQICGVADVPSSAVVSVILGEPEVALAAAMGCLERGVRVGCFRPPTVPAGTSRLRLTARASLSDDEMALAREVLTDVLSRA.

Substrate is bound at residue arginine 26. A pyridoxal 5'-phosphate-binding site is contributed by 104–105; it reads GY. Histidine 129 lines the substrate pocket. Pyridoxal 5'-phosphate-binding positions include serine 175, 200 to 203, and 232 to 235; these read DEAH and TLSK. The residue at position 235 (lysine 235) is an N6-(pyridoxal phosphate)lysine. Threonine 345 provides a ligand contact to substrate.

Belongs to the class-II pyridoxal-phosphate-dependent aminotransferase family. BioF subfamily. As to quaternary structure, homodimer. It depends on pyridoxal 5'-phosphate as a cofactor.

The catalysed reaction is 6-carboxyhexanoyl-[ACP] + L-alanine + H(+) = (8S)-8-amino-7-oxononanoate + holo-[ACP] + CO2. Its pathway is cofactor biosynthesis; biotin biosynthesis. Catalyzes the decarboxylative condensation of pimeloyl-[acyl-carrier protein] and L-alanine to produce 8-amino-7-oxononanoate (AON), [acyl-carrier protein], and carbon dioxide. The protein is 8-amino-7-oxononanoate synthase of Mycolicibacterium gilvum (strain PYR-GCK) (Mycobacterium gilvum (strain PYR-GCK)).